A 268-amino-acid chain; its full sequence is Calpain small subunit 1 (268 aa).

Position 1 is an N-acetylmethionine (Met1). Ser6 bears the Phosphoserine mark. One can recognise an EF-hand 1; atypical domain in the interval 91-125 (EANESEEVRQFRRLFAQLAGDDMEVSATELMNILN). Residues Ala109, Asp112, Glu114, Glu119, Asp137, Asp152, Asp154, Thr156, Lys158, and Glu163 each contribute to the Ca(2+) site. 4 consecutive EF-hand domains span residues 139–172 (FGID…NNIK), 169–204 (NNIK…AGFH), 205–233 (LNEH…ISCL), and 234–268 (VRLD…TMYS). Lys179 carries the post-translational modification N6-acetyllysine. Ca(2+) contacts are provided by Asp182, Asp184, Ser186, Thr188, Glu193, and Asp225.

In terms of assembly, homodimer or heterodimer of a large (catalytic) and a small (regulatory) subunit. In presence of calcium, the heterodimer dissociates.

Its subcellular location is the cytoplasm. The protein resides in the cell membrane. In terms of biological role, regulatory subunit of the calcium-regulated non-lysosomal thiol-protease which catalyzes limited proteolysis of substrates involved in cytoskeletal remodeling and signal transduction. Essential for embryonic development. This chain is Calpain small subunit 1 (CAPNS1), found in Homo sapiens (Human).